Reading from the N-terminus, the 453-residue chain is Tol-Pal system protein TolB (453 aa).

The first 39 residues, 1-39, serve as a signal peptide directing secretion; that stretch reads MSFIPNTEAEALSALFSRRSVLGATAAGGLLATPLAAFA.

This sequence belongs to the TolB family. As to quaternary structure, the Tol-Pal system is composed of five core proteins: the inner membrane proteins TolA, TolQ and TolR, the periplasmic protein TolB and the outer membrane protein Pal. They form a network linking the inner and outer membranes and the peptidoglycan layer.

The protein localises to the periplasm. Part of the Tol-Pal system, which plays a role in outer membrane invagination during cell division and is important for maintaining outer membrane integrity. This is Tol-Pal system protein TolB from Gluconobacter oxydans (strain 621H) (Gluconobacter suboxydans).